A 206-amino-acid polypeptide reads, in one-letter code: Charged multivesicular body protein 2a homolog 1 (206 aa).

Positions 1-32 (MSFFGGNKKTPEQELKDSKRELSKGQREMDRE) are disordered. Residues 9 to 32 (KTPEQELKDSKRELSKGQREMDRE) show a composition bias toward basic and acidic residues. 2 coiled-coil regions span residues 12-80 (EQEL…RATK) and 114-148 (NKQTDLVQLQKTMMEYEKQTQRVEMTEEMMQDMFE).

This sequence belongs to the SNF7 family. As to quaternary structure, probable core component of the endosomal sorting required for transport complex III (ESCRT-III). ESCRT-III components are thought to multimerize to form a flat lattice on the perimeter membrane of the endosome.

Its subcellular location is the endosome membrane. In terms of biological role, probable core component of the endosomal sorting required for transport complex III (ESCRT-III) which is involved in multivesicular bodies (MVBs) formation and sorting of endosomal cargo proteins into MVBs. MVBs contain intraluminal vesicles (ILVs) that are generated by invagination and scission from the limiting membrane of the endosome and are delivered to lysosomes enabling degradation of membrane proteins. The protein is Charged multivesicular body protein 2a homolog 1 (chmp2a1) of Dictyostelium discoideum (Social amoeba).